We begin with the raw amino-acid sequence, 301 residues long: MRLAFMGSPGFAVPALRALHAAGHDIVAVYCQPPRPVGRGHRIHKCPVHEAAEALGLTVRTPERLRRDDAERAYFRALDLDAAVVAAYGQILPADMLVAPRRGCINIHASLLPRWRGAAPIHAAILAGDAQTGVTIMQMDEGLDTGATLLAEAVPIGPEDTMVDLLDRLADLGAALVIKVLDGNFPPVPQPEGGVTYAPKLSKADAEIDWSASAAVILRRIRAFRPWPGTETRLDGEALKIIRAEPAAGQGEPGTVLDDRLAIACGDAAIRPTLVQRAGRAAMQAEAFLRGHPVAIGTRLG.

Residue serine 110–proline 113 participates in (6S)-5,6,7,8-tetrahydrofolate binding.

It belongs to the Fmt family.

The enzyme catalyses L-methionyl-tRNA(fMet) + (6R)-10-formyltetrahydrofolate = N-formyl-L-methionyl-tRNA(fMet) + (6S)-5,6,7,8-tetrahydrofolate + H(+). Its function is as follows. Attaches a formyl group to the free amino group of methionyl-tRNA(fMet). The formyl group appears to play a dual role in the initiator identity of N-formylmethionyl-tRNA by promoting its recognition by IF2 and preventing the misappropriation of this tRNA by the elongation apparatus. This is Methionyl-tRNA formyltransferase from Acidiphilium cryptum (strain JF-5).